The sequence spans 505 residues: Catalase (505 aa).

Catalysis depends on residues His-56 and Asn-129. A heme-binding site is contributed by Tyr-339.

The protein belongs to the catalase family. The cofactor is heme.

It is found in the cytoplasm. The catalysed reaction is 2 H2O2 = O2 + 2 H2O. Decomposes hydrogen peroxide into water and oxygen; serves to protect cells from the toxic effects of hydrogen peroxide. The polypeptide is Catalase (katA) (Helicobacter pylori (strain J99 / ATCC 700824) (Campylobacter pylori J99)).